The following is a 953-amino-acid chain: Xylosyltransferase 1 (953 aa).

Residues 1 to 17 are Cytoplasmic-facing; sequence MVAAPCARRLARRSHSA. A helical; Signal-anchor for type II membrane protein membrane pass occupies residues 18 to 38; the sequence is LLAALMVLLLHTLVVWNFSSL. At 39–953 the chain is on the lumenal side; that stretch reads DSGAGEQRRA…GAVKPDGRLR (915 aa). A compositionally biased stretch (low complexity) spans 48–62; sequence AGAAAGAAEQQQPAA. Disordered regions lie at residues 48-67 and 74-251; these read AGAAAGAAEQQQPAAPRRER and LPAA…APKC. The span at 79–97 shows a compositional bias: gly residues; that stretch reads GGPGGRAGGGGARGGGPGG. Basic and acidic residues predominate over residues 138–154; the sequence is KVRTDSNNENSVPKDFE. Polar residues predominate over residues 156-165; it reads VDNSNFAPRT. Composition is skewed to basic and acidic residues over residues 170–197 and 205–216; these read HQPELAKKPPSRQKEHLQRKLDALDKRQ and GPKEVLPPREKA. Asn-219 carries N-linked (GlcNAc...) asparagine glycosylation. 4 disulfide bridges follow: Cys-251-Cys-279, Cys-295-Cys-536, Cys-555-Cys-568, and Cys-557-Cys-566. UDP-alpha-D-xylose contacts are provided by residues Val-327, Asp-355, and 384 to 386; that span reads TIW. N-linked (GlcNAc...) asparagine glycosylation occurs at Asn-415. 488–489 is a UDP-alpha-D-xylose binding site; the sequence is DW. UDP-alpha-D-xylose contacts are provided by residues Ser-569 and 592 to 593; that span reads RK. 2 disulfides stabilise this stretch: Cys-669/Cys-921 and Cys-914/Cys-927. Asn-771 carries an N-linked (GlcNAc...) asparagine glycan. Residues 933–953 form a disordered region; that stretch reads SSFSPDPKSELGAVKPDGRLR.

This sequence belongs to the glycosyltransferase 14 family. XylT subfamily. As to quaternary structure, monomer. It depends on a divalent metal cation as a cofactor. In terms of processing, contains 7 disulfide bonds. N-glycosylated. As to expression, detected in brain, spleen, kidney and testis, and at low levels in skeletal muscle.

The protein localises to the golgi apparatus membrane. The catalysed reaction is UDP-alpha-D-xylose + L-seryl-[protein] = 3-O-(beta-D-xylosyl)-L-seryl-[protein] + UDP + H(+). Its pathway is glycan metabolism; chondroitin sulfate biosynthesis. The protein operates within glycan metabolism; heparan sulfate biosynthesis. Catalyzes the first step in the biosynthesis of chondroitin sulfate and dermatan sulfate proteoglycans, such as DCN. Transfers D-xylose from UDP-D-xylose to specific serine residues of the core protein. Required for normal maturation of chondrocytes during bone development, normal onset of ossification and normal embryonic and postnatal skeleton development, especially of the long bones. This is Xylosyltransferase 1 (Xylt1) from Mus musculus (Mouse).